A 138-amino-acid polypeptide reads, in one-letter code: MRHGKVHRKLNRTAEHRKAMFANMAASLIKHEQIVTTLPKAKELRPIVEKLVTLGKKGGLDKRRQAISEMRDIDQVKKLFAVLAPRYKDRQGGYTRIIKAGFRYGDNAPMAVIEFVDRDVDAKGQDSGPVQEKATEAA.

The protein belongs to the bacterial ribosomal protein bL17 family. Part of the 50S ribosomal subunit. Contacts protein L32.

In Nitrobacter hamburgensis (strain DSM 10229 / NCIMB 13809 / X14), this protein is Large ribosomal subunit protein bL17.